We begin with the raw amino-acid sequence, 507 residues long: MDNTKKYIVSLDSGTTSCRTIIFDQNGNMVSSAQTEFTQYFPQSGWVEHDAIEIWTTQLGTLQSAKSRANIKSHNMAAIGITNQRETVVLWDKETGLPVYNAIVWQDRRTSEYCDELIKQGKANIISSKTGLIINPYFSGTKIRWILKNVPEAAQKLQEHKLLAGTIDTWLIWKLTDGKVHATDVTNASRTMLYNINTLEWDQEILDLLEIPREILPVVKSSSELYGTINPKYLSQRATAAVPIMGVAGDQQSSLFGQLCTEPGMVKNTYGTGCFTLINTGERAIFSKNKLVTTIAWKLGNQKPIYALEGSVFIAGSGIKWLRDSIKVIYNAQECDFYCGLADQEPQNVYMVPSFTGLGAPYWDSSSRGAIFGLERGTKREHIVKATIEAIAFQSNDLLSAMQKDIGKKINIMKVDGGASNSNYLMQFQSSISDVTIMRPTNIETTALGAAYLAGSASGFWKSIDELKKLNPIDKSFRPGLSKEVVNKKLKGWQEAVKRTFNWTNSI.

Threonine 15 provides a ligand contact to ADP. Residues threonine 15, threonine 16, and serine 17 each coordinate ATP. Threonine 15 serves as a coordination point for sn-glycerol 3-phosphate. Residue arginine 19 coordinates ADP. Sn-glycerol 3-phosphate is bound by residues arginine 85, glutamate 86, tyrosine 137, and aspartate 250. The glycerol site is built by arginine 85, glutamate 86, tyrosine 137, aspartate 250, and glutamine 251. Threonine 272, glycine 316, and glycine 418 together coordinate ADP. Residues threonine 272, glycine 316, and glycine 418 each contribute to the ATP site.

This sequence belongs to the FGGY kinase family.

The catalysed reaction is glycerol + ATP = sn-glycerol 3-phosphate + ADP + H(+). It functions in the pathway polyol metabolism; glycerol degradation via glycerol kinase pathway; sn-glycerol 3-phosphate from glycerol: step 1/1. Its activity is regulated as follows. Inhibited by fructose 1,6-bisphosphate (FBP). Functionally, key enzyme in the regulation of glycerol uptake and metabolism. Catalyzes the phosphorylation of glycerol to yield sn-glycerol 3-phosphate. This is Glycerol kinase from Malacoplasma penetrans (strain HF-2) (Mycoplasma penetrans).